The chain runs to 305 residues: Insulin-like growth factor-binding protein 2 (305 aa).

A signal peptide spans 1–34; sequence MLPRLGGPALPLLLPSLLLLLLLGAGGCGPGVRA. Positions 36 to 118 constitute an IGFBP N-terminal domain; it reads VLFRCPPCTP…VTGAGTCEKR (83 aa). 9 cysteine pairs are disulfide-bonded: C40–C68, C43–C70, C51–C71, C59–C74, C82–C95, C89–C115, C207–C241, C252–C263, and C265–C286. One can recognise a Thyroglobulin type-1 domain in the interval 204–286; it reads RTPCQQELDQ…APTIRGDPEC (83 aa). Positions 281-283 match the Cell attachment site motif; that stretch reads RGD.

In terms of assembly, interacts with IGF1. Interacts with IGF2. Interacts (via RGD motif) with integrin alpha5/ITGA5; this interaction induces cell migration, adhesion or apoptosis according to the context. Interacts with PTPRB; this interaction leads to PTPRB dimerization and inactivation. In terms of processing, cleaved by MMP9 leading to release of free IGF2 from IGFBP2-IGF2 complex, which contributes to enhance the motility and the growth of astrocytes. Post-translationally, O-glycosylated. As to expression, highly expressed in adult liver, but also in kidney, lung, brain, spleen, testis and ovary.

The protein localises to the secreted. Functionally, multifunctional protein that plays a critical role in regulating the availability of IGFs such as IGF1 and IGF2 to their receptors and thereby regulates IGF-mediated cellular processes including proliferation, differentiation, and apoptosis in a cell-type specific manner. Functions coordinately with receptor protein tyrosine phosphatase beta/PTPRB and the IGF1 receptor to regulate IGF1-mediated signaling by stimulating the phosphorylation of PTEN leading to its inactivation and AKT1 activation. Plays a positive role in cell migration via interaction with integrin alpha5/ITGA5 through an RGD motif. Additionally, interaction with ITGA5/ITGB1 enhances the adhesion of endothelial progenitor cells to endothelial cells. Upon mitochondrial damage, facilitates apoptosis with ITGA5 of podocytes, and then activates the phosphorylation of focal adhesion kinase (FAK)-mediated mitochondrial injury. The protein is Insulin-like growth factor-binding protein 2 (Igfbp2) of Mus musculus (Mouse).